A 314-amino-acid chain; its full sequence is uncharacterized protein (314 aa).

Residues 1–70 form a disordered region; it reads MAGNSQRRGA…QGRHKKTDDT (70 aa). Residues 44–65 show a composition bias toward basic residues; it reads RPHHPAGKRAAKAARQAQGRHK. S-adenosyl-L-methionine contacts are provided by Gly-265, Ile-285, and Leu-294.

It belongs to the class IV-like SAM-binding methyltransferase superfamily. RNA methyltransferase TrmH family.

This is an uncharacterized protein from Mycolicibacterium gilvum (strain PYR-GCK) (Mycobacterium gilvum (strain PYR-GCK)).